Here is a 337-residue protein sequence, read N- to C-terminus: ATP-dependent 6-phosphofructokinase (337 aa).

Glycine 11 is a binding site for ATP. 21–25 (RAVVR) is an ADP binding site. ATP contacts are provided by residues 72–73 (RY) and 102–105 (GDGS). Aspartate 103 contacts Mg(2+). Residue 125–127 (TID) participates in substrate binding. The active-site Proton acceptor is the aspartate 127. Residue arginine 154 coordinates ADP. Substrate is bound by residues arginine 162 and 169–171 (MGR). Residues 185–187 (GAD) and 214–216 (KNH) contribute to the ADP site. Substrate-binding positions include glutamate 223, arginine 245, and 251 to 254 (HILR).

This sequence belongs to the phosphofructokinase type A (PFKA) family. ATP-dependent PFK group I subfamily. Prokaryotic clade 'B1' sub-subfamily. As to quaternary structure, homotetramer. The cofactor is Mg(2+).

It is found in the cytoplasm. The enzyme catalyses beta-D-fructose 6-phosphate + ATP = beta-D-fructose 1,6-bisphosphate + ADP + H(+). Its pathway is carbohydrate degradation; glycolysis; D-glyceraldehyde 3-phosphate and glycerone phosphate from D-glucose: step 3/4. With respect to regulation, allosterically activated by ADP and other diphosphonucleosides, and allosterically inhibited by phosphoenolpyruvate. Functionally, catalyzes the phosphorylation of D-fructose 6-phosphate to fructose 1,6-bisphosphate by ATP, the first committing step of glycolysis. This Streptococcus uberis (strain ATCC BAA-854 / 0140J) protein is ATP-dependent 6-phosphofructokinase.